A 164-amino-acid chain; its full sequence is ATP synthase subunit b (164 aa).

A helical membrane pass occupies residues 10 to 32 (AVAFVLFFVLFGKKLWTPLAAAL).

The protein belongs to the ATPase B chain family. In terms of assembly, F-type ATPases have 2 components, F(1) - the catalytic core - and F(0) - the membrane proton channel. F(1) has five subunits: alpha(3), beta(3), gamma(1), delta(1), epsilon(1). F(0) has three main subunits: a(1), b(2) and c(10-14). The alpha and beta chains form an alternating ring which encloses part of the gamma chain. F(1) is attached to F(0) by a central stalk formed by the gamma and epsilon chains, while a peripheral stalk is formed by the delta and b chains.

It is found in the cell inner membrane. F(1)F(0) ATP synthase produces ATP from ADP in the presence of a proton or sodium gradient. F-type ATPases consist of two structural domains, F(1) containing the extramembraneous catalytic core and F(0) containing the membrane proton channel, linked together by a central stalk and a peripheral stalk. During catalysis, ATP synthesis in the catalytic domain of F(1) is coupled via a rotary mechanism of the central stalk subunits to proton translocation. In terms of biological role, component of the F(0) channel, it forms part of the peripheral stalk, linking F(1) to F(0). In Gluconacetobacter diazotrophicus (strain ATCC 49037 / DSM 5601 / CCUG 37298 / CIP 103539 / LMG 7603 / PAl5), this protein is ATP synthase subunit b.